The primary structure comprises 243 residues: MAGHSKWANIQHRKGRQDAKRGKLWTKIIREITVAARAGGPDPDSNPRLRMAWDKATDANMPKDNIQRAIQRGAGGADGANYEEVRYEGYGIGGAAVIVDCMTDNRTRTVAEVRHAFAKNGGNLGQEGSVAFMFKHCGQFVFAPGTAEDVVMEAALEAGAEDVTTDDEGVIEVICAPADYAAVRQAFEAAGLKAEVEGIIMKPQNETELTGEDAVKMQKLLDALEGLDDVQEVYTTVVFDEAQ.

The tract at residues 1–21 (MAGHSKWANIQHRKGRQDAKR) is disordered.

Belongs to the TACO1 family.

It is found in the cytoplasm. The polypeptide is Probable transcriptional regulatory protein Bpet3099 (Bordetella petrii (strain ATCC BAA-461 / DSM 12804 / CCUG 43448)).